Consider the following 146-residue polypeptide: 3-dehydroquinate dehydratase (146 aa).

Tyr23 (proton acceptor) is an active-site residue. Asn79, His85, and Asp92 together coordinate substrate. His105 functions as the Proton donor in the catalytic mechanism. Substrate-binding positions include Ile106–Ser107 and Arg116.

This sequence belongs to the type-II 3-dehydroquinase family. In terms of assembly, homododecamer.

The catalysed reaction is 3-dehydroquinate = 3-dehydroshikimate + H2O. The protein operates within metabolic intermediate biosynthesis; chorismate biosynthesis; chorismate from D-erythrose 4-phosphate and phosphoenolpyruvate: step 3/7. In terms of biological role, catalyzes a trans-dehydration via an enolate intermediate. The chain is 3-dehydroquinate dehydratase from Variovorax paradoxus (strain S110).